The sequence spans 106 residues: ATP-dependent Clp protease adapter protein ClpS (106 aa).

The segment covering Met1–Asp10 has biased composition (basic and acidic residues). The tract at residues Met1–Val22 is disordered.

This sequence belongs to the ClpS family. Binds to the N-terminal domain of the chaperone ClpA.

In terms of biological role, involved in the modulation of the specificity of the ClpAP-mediated ATP-dependent protein degradation. The polypeptide is ATP-dependent Clp protease adapter protein ClpS (Xylella fastidiosa (strain 9a5c)).